Consider the following 1076-residue polypeptide: Envelopment polyprotein (1076 aa).

The signal sequence occupies residues 1–18 (MIVPIVLFLTLCPSELSA). Topologically, residues 19-455 (WGSPGDPIVC…NPQCYPVKKW (437 aa)) are lumenal. Disulfide bonds link C28–C51, C145–C158, C182–C329, C208–C218, C260–C307, C289–C294, C351–C354, C358–C426, and C378–C383. A helical membrane pass occupies residues 456-476 (LFLVVVIMCCYCALMLLTNIL). Positions 477–523 (RAIGVWGTWVFAPIKLALALGLRLAKLSKKGLVAVVTRGQMIVNDEL) are golgi retention signal. Topologically, residues 477–539 (RAIGVWGTWV…RGEQNEGRQG (63 aa)) are cytoplasmic. Residues 544 to 566 (GPIRHWLYSPALILILTTSICSG) form an internal signal sequence for glycoprotein C region. 10 disulfides stabilise this stretch: C567/C608, C580/C590, C633/C729, C648/C845, C654/C702, C660/C709, C664/C691, C695/C700, C782/C797, and C813/C827. Residues 567 to 1040 (CDELVHAESK…ALFGDGITRW (474 aa)) lie on the Lumenal side of the membrane. The fusion loop stretch occupies residues 654-660 (CRWAGDC). The fusion loop stretch occupies residues 695 to 709 (CGGAACGCFNAAPSC). N-linked (GlcNAc...) asparagine; by host glycans are attached at residues N857 and N918. Intrachain disulfides connect C912–C982 and C922–C925. A glycan (N-linked (GlcNAc...) asparagine; by host) is linked at N940. The helical transmembrane segment at 1041–1061 (ILGIIGVLLACVMLFVVVVAI) threads the bilayer. The Cytoplasmic portion of the chain corresponds to 1062 to 1076 (TRRLIKGLTQRAKVA).

The protein belongs to the phlebovirus envelope glycoprotein family. Heterodimer with glycoprotein C. As to quaternary structure, heterodimer with glycoprotein N. Homotrimer (postfusion). In terms of processing, specific enzymatic cleavages in vivo yield mature proteins Glycoprotein C, and Glycoprotein N. Glycosylated. Post-translationally, palmitoylated.

The protein resides in the virion membrane. It is found in the host Golgi apparatus membrane. It localises to the host endoplasmic reticulum membrane. In terms of biological role, structural component of the virion that interacts with glycoprotein C. It shields the hydrophobic fusion loops of the glycoprotein C, preventing premature fusion. The glycoprotein protrusions are arranged on an icosahedral lattice, with T=12 triangulation. They are able to attach the virion to the host cell receptor CD209/DC-SIGN and to promote fusion of membranes with the late endosome after endocytosis of the virion. Plays a role in the packaging of ribonucleoproteins during virus assembly. Structural component of the virion that interacts with glycoprotein N. Acts as a class II fusion protein that is activated upon acidification and subsequent repositioning of the glycoprotein N. The glycoprotein protrusions are arranged on an icosahedral lattice, with T=12 triangulation. They are able to attach the virion to the host cell receptor CD209/DC-SIGN and to promote fusion of membranes with the late endosome after endocytosis of the virion. The chain is Envelopment polyprotein (GP) from Alces americanus (American moose).